The primary structure comprises 227 residues: Cytochrome c oxidase subunit 2 (227 aa).

Over 1–14 (MAYPLQLGFQDATS) the chain is Mitochondrial intermembrane. The helical transmembrane segment at 15–45 (PVMEELLHFHDHTLMIIFLISSLVLYIIMLM) threads the bilayer. Topologically, residues 46–59 (LTTKLIHTNMMNVQ) are mitochondrial matrix. A helical transmembrane segment spans residues 60–87 (EMEMIWTILPAIILILIALPSLHTLYMM). The Mitochondrial intermembrane segment spans residues 88–227 (DEINNPLLTI…YFESWSASLA (140 aa)). 6 residues coordinate Cu cation: His161, Cys196, Glu198, Cys200, His204, and Met207. Glu198 is a binding site for Mg(2+). Residue Tyr218 is modified to Phosphotyrosine.

It belongs to the cytochrome c oxidase subunit 2 family. As to quaternary structure, component of the cytochrome c oxidase (complex IV, CIV), a multisubunit enzyme composed of 14 subunits. The complex is composed of a catalytic core of 3 subunits MT-CO1, MT-CO2 and MT-CO3, encoded in the mitochondrial DNA, and 11 supernumerary subunits COX4I, COX5A, COX5B, COX6A, COX6B, COX6C, COX7A, COX7B, COX7C, COX8 and NDUFA4, which are encoded in the nuclear genome. The complex exists as a monomer or a dimer and forms supercomplexes (SCs) in the inner mitochondrial membrane with NADH-ubiquinone oxidoreductase (complex I, CI) and ubiquinol-cytochrome c oxidoreductase (cytochrome b-c1 complex, complex III, CIII), resulting in different assemblies (supercomplex SCI(1)III(2)IV(1) and megacomplex MCI(2)III(2)IV(2)). Found in a complex with TMEM177, COA6, COX18, COX20, SCO1 and SCO2. Interacts with TMEM177 in a COX20-dependent manner. Interacts with COX20. Interacts with COX16. Requires Cu cation as cofactor.

Its subcellular location is the mitochondrion inner membrane. The catalysed reaction is 4 Fe(II)-[cytochrome c] + O2 + 8 H(+)(in) = 4 Fe(III)-[cytochrome c] + 2 H2O + 4 H(+)(out). Functionally, component of the cytochrome c oxidase, the last enzyme in the mitochondrial electron transport chain which drives oxidative phosphorylation. The respiratory chain contains 3 multisubunit complexes succinate dehydrogenase (complex II, CII), ubiquinol-cytochrome c oxidoreductase (cytochrome b-c1 complex, complex III, CIII) and cytochrome c oxidase (complex IV, CIV), that cooperate to transfer electrons derived from NADH and succinate to molecular oxygen, creating an electrochemical gradient over the inner membrane that drives transmembrane transport and the ATP synthase. Cytochrome c oxidase is the component of the respiratory chain that catalyzes the reduction of oxygen to water. Electrons originating from reduced cytochrome c in the intermembrane space (IMS) are transferred via the dinuclear copper A center (CU(A)) of subunit 2 and heme A of subunit 1 to the active site in subunit 1, a binuclear center (BNC) formed by heme A3 and copper B (CU(B)). The BNC reduces molecular oxygen to 2 water molecules using 4 electrons from cytochrome c in the IMS and 4 protons from the mitochondrial matrix. This chain is Cytochrome c oxidase subunit 2 (MT-CO2), found in Elephas maximus (Indian elephant).